A 245-amino-acid chain; its full sequence is Exosome complex component RRP41 (245 aa).

Position 2 is an N-acetylalanine (A2).

Belongs to the RNase PH family. In terms of assembly, component of the RNA exosome core complex (Exo-9), composed of EXOSC1, EXOSC2, EXOSC3, EXOSC4, EXOSC5, EXOSC6, EXOSC7, EXOSC8 and EXOSC9; within the complex interacts with EXOSC2, EXOSC7 and EXOSC9. The catalytically inactive RNA exosome core complex (Exo-9) associates with the catalytic subunit EXOSC10/RRP6. Exo-9 may associate with DIS3 to form the nucleolar exosome complex, or DIS3L to form the cytoplasmic exosome complex. Exo-9 is formed by a hexameric base ring consisting of the heterodimers EXOSC4-EXOSC9, EXOSC5-EXOSC8 and EXOSC6-EXOSC7, and a cap ring consisting of EXOSC1, EXOSC2 and EXOSC3. The RNA exosome complex associates with cofactors C1D/RRP47, MPHOSPH6/MPP6 and MTREX/MTR4. Interacts with DDX60. Interacts with DIS3; the interaction is direct.

The protein resides in the cytoplasm. Its subcellular location is the nucleus. The protein localises to the nucleolus. It localises to the nucleoplasm. Functionally, non-catalytic component of the RNA exosome complex which has 3'-&gt;5' exoribonuclease activity and participates in a multitude of cellular RNA processing and degradation events. In the nucleus, the RNA exosome complex is involved in proper maturation of stable RNA species such as rRNA, snRNA and snoRNA, in the elimination of RNA processing by-products and non-coding 'pervasive' transcripts, such as antisense RNA species and promoter-upstream transcripts (PROMPTs), and of mRNAs with processing defects, thereby limiting or excluding their export to the cytoplasm. The RNA exosome may be involved in Ig class switch recombination (CSR) and/or Ig variable region somatic hypermutation (SHM) by targeting AICDA deamination activity to transcribed dsDNA substrates. In the cytoplasm, the RNA exosome complex is involved in general mRNA turnover and specifically degrades inherently unstable mRNAs containing AU-rich elements (AREs) within their 3' untranslated regions, and in RNA surveillance pathways, preventing translation of aberrant mRNAs. It seems to be involved in degradation of histone mRNA. The catalytic inactive RNA exosome core complex of 9 subunits (Exo-9) is proposed to play a pivotal role in the binding and presentation of RNA for ribonucleolysis, and to serve as a scaffold for the association with catalytic subunits and accessory proteins or complexes. EXOSC4 binds to ARE-containing RNAs. This is Exosome complex component RRP41 (EXOSC4) from Homo sapiens (Human).